The chain runs to 115 residues: Large ribosomal subunit protein bL20 (115 aa).

Belongs to the bacterial ribosomal protein bL20 family.

Its function is as follows. Binds directly to 23S ribosomal RNA and is necessary for the in vitro assembly process of the 50S ribosomal subunit. It is not involved in the protein synthesizing functions of that subunit. This chain is Large ribosomal subunit protein bL20, found in Mycoplasmoides gallisepticum (strain R(low / passage 15 / clone 2)) (Mycoplasma gallisepticum).